A 380-amino-acid chain; its full sequence is 3-isopropylmalate dehydrogenase (380 aa).

79 to 90 (GPEWAGVHPTPE) provides a ligand contact to NAD(+). Substrate is bound by residues arginine 97, arginine 107, arginine 136, and aspartate 229. Residues aspartate 229, aspartate 254, and aspartate 258 each coordinate Mg(2+). Residue 294–306 (GSAPDISGKGLAN) coordinates NAD(+).

Belongs to the isocitrate and isopropylmalate dehydrogenases family. Homodimer. Mg(2+) serves as cofactor. It depends on Mn(2+) as a cofactor.

Its subcellular location is the cytoplasm. The catalysed reaction is (2R,3S)-3-isopropylmalate + NAD(+) = 4-methyl-2-oxopentanoate + CO2 + NADH. It functions in the pathway amino-acid biosynthesis; L-leucine biosynthesis; L-leucine from 3-methyl-2-oxobutanoate: step 3/4. Catalyzes the oxidation of 3-carboxy-2-hydroxy-4-methylpentanoate (3-isopropylmalate) to 3-carboxy-4-methyl-2-oxopentanoate. The product decarboxylates to 4-methyl-2 oxopentanoate. This is 3-isopropylmalate dehydrogenase (LEU2) from Hapsidospora chrysogena (Acremonium chrysogenum).